The following is a 207-amino-acid chain: Large ribosomal subunit protein uL4 (207 aa).

The disordered stretch occupies residues 58-85 (AGSGKKPFKQKGTGQARQGCRRAPQYPG).

This sequence belongs to the universal ribosomal protein uL4 family. Part of the 50S ribosomal subunit.

One of the primary rRNA binding proteins, this protein initially binds near the 5'-end of the 23S rRNA. It is important during the early stages of 50S assembly. It makes multiple contacts with different domains of the 23S rRNA in the assembled 50S subunit and ribosome. Functionally, forms part of the polypeptide exit tunnel. The polypeptide is Large ribosomal subunit protein uL4 (Geotalea uraniireducens (strain Rf4) (Geobacter uraniireducens)).